Consider the following 1031-residue polypeptide: Kinesin heavy chain (1031 aa).

Residues Asn8–Ile325 enclose the Kinesin motor domain. An ATP-binding site is contributed by Gly84–Thr91. A coiled-coil region spans residues Pro393–Leu857. Residues Thr673–Met686 are compositionally biased toward basic and acidic residues. Disordered regions lie at residues Thr673–Met692 and Arg906–Ser1031. The interval Pro858 to Ser1031 is globular. A compositionally biased stretch (gly residues) spans Gly932–Ser949. Polar residues-rich tracts occupy residues Ser964–Asp977 and Arg1014–Ser1031.

Belongs to the TRAFAC class myosin-kinesin ATPase superfamily. Kinesin family. Kinesin subfamily. As to quaternary structure, oligomer composed of two heavy chains and two light chains.

It is found in the cytoplasm. The protein localises to the cytoskeleton. Its function is as follows. Kinesin is a microtubule-associated force-producing protein that may play a role in organelle transport. This Strongylocentrotus purpuratus (Purple sea urchin) protein is Kinesin heavy chain.